A 327-amino-acid polypeptide reads, in one-letter code: Protein-L-isoaspartate O-methyltransferase (327 aa).

2 disordered regions span residues Met-1–Arg-38 and Pro-62–Thr-105. Positions Glu-14 to Glu-29 are enriched in basic and acidic residues. Low complexity predominate over residues Pro-62–Pro-77. Positions Ala-92–Thr-105 are enriched in polar residues. Residue Ser-175 is part of the active site.

It belongs to the methyltransferase superfamily. L-isoaspartyl/D-aspartyl protein methyltransferase family.

It localises to the cytoplasm. The catalysed reaction is [protein]-L-isoaspartate + S-adenosyl-L-methionine = [protein]-L-isoaspartate alpha-methyl ester + S-adenosyl-L-homocysteine. Functionally, catalyzes the methyl esterification of L-isoaspartyl residues in peptides and proteins that result from spontaneous decomposition of normal L-aspartyl and L-asparaginyl residues. It plays a role in the repair and/or degradation of damaged proteins. In Burkholderia thailandensis (strain ATCC 700388 / DSM 13276 / CCUG 48851 / CIP 106301 / E264), this protein is Protein-L-isoaspartate O-methyltransferase.